Reading from the N-terminus, the 802-residue chain is MAPINGSRNGKHSKPQRGGNLKRKRVQEDLNSLIKKVEDLDVKETIEQFTDLPLSEPTASGLASSHYKTLTDIQSRAISHALKGRDILGAAKTGSGKTLAFLIPILENLYRKQWSEHDGLGALVLSPTRELAIQIFEVLRKVGRYHTFSAGLVIGGKSLREEQERLGRMNILVCTPGRMLQHLDQTSFFETHNLQMLVLDEADRILDMGFQKTVDAIIGHLPKERQTLLFSATQTKKVSDLARLSLQDPEYVAVHEAASSATPSKLQQHYVVTPLPQKLDVLWSFIRSNLKSKTIVFLSSGKQVRFVYESFRHMQPGVPLMHLHGRQKQGGRLDITTKFSSAQHAVLFATDVAARGLDFPAVDWVIQLDCPEDADTYIHRVGRTARYERDGRAVLFLDPSEEKGMLKRLEQKKVQVERINVKANKQQSIKDQLQNMCFKDPELKYLGQKAFISYAKSVYVQKDKEIFNIKELKLDEFAGSLGLPGAPRIKFIKGDDTKERKNAPRATAYLSSDDESDEEGEKKKTKKDETQVRTKYDRMFERRNQDVLADHYHKLINDDGTMVETNKATEDADEDDDFLSVKRRYEAGDKDLDVGGSSSEDEEDADGTEKKGAKVVHLDGKEALVIDSKRREKLLKSKKKLLKFKGKGTKLIYDDEGNAHELYEMEDEEQFKAKGDAKEQQAKFLAEEAERTRQADLEDKEVAKQKKREKKEKRKARERELLAMEEEGGDLVQIPYKEGGLASDEDEEVLRPSKKARVSFADEASEEEPKPKKAKKSQPAGKAPEQIETLEDLESLAAGLLG.

The interval 1 to 24 (MAPINGSRNGKHSKPQRGGNLKRK) is disordered. Basic residues predominate over residues 9–24 (NGKHSKPQRGGNLKRK). The Q motif signature appears at 47–75 (EQFTDLPLSEPTASGLASSHYKTLTDIQS). The Helicase ATP-binding domain maps to 78–252 (ISHALKGRDI…RLSLQDPEYV (175 aa)). 91–98 (AKTGSGKT) lines the ATP pocket. The DEAD box signature appears at 200–203 (DEAD). The Helicase C-terminal domain maps to 274-437 (PLPQKLDVLW…SIKDQLQNMC (164 aa)). Disordered stretches follow at residues 494–538 (GDDT…KYDR), 589–614 (DKDLDVGGSSSEDEEDADGTEKKGAK), and 685–802 (LAEE…GLLG). Over residues 520 to 538 (GEKKKTKKDETQVRTKYDR) the composition is skewed to basic and acidic residues. The span at 685–704 (LAEEAERTRQADLEDKEVAK) shows a compositional bias: basic and acidic residues. Positions 705-714 (QKKREKKEKR) are enriched in basic residues.

This sequence belongs to the DEAD box helicase family. DDX10/DBP4 subfamily. In terms of assembly, interacts with the U3 and U14 snoRNAs. Associates with pre-ribosomal complexes.

Its subcellular location is the nucleus. The protein resides in the nucleolus. The catalysed reaction is ATP + H2O = ADP + phosphate + H(+). ATP-dependent RNA helicase required for ribosome biogenesis. Involved in the release of U14 snoRNA in pre-ribosomal complexes. Required for pre-rRNA cleavage at site A2. The chain is ATP-dependent RNA helicase dbp4 (dbp4) from Aspergillus niger (strain ATCC MYA-4892 / CBS 513.88 / FGSC A1513).